Reading from the N-terminus, the 385-residue chain is 1-deoxy-D-xylulose 5-phosphate reductoisomerase (385 aa).

NADPH is bound by residues threonine 13, glycine 14, serine 15, isoleucine 16, asparagine 40, and asparagine 122. Lysine 123 is a 1-deoxy-D-xylulose 5-phosphate binding site. NADPH is bound at residue glutamate 124. A Mn(2+)-binding site is contributed by aspartate 148. Serine 149, glutamate 150, serine 177, and histidine 200 together coordinate 1-deoxy-D-xylulose 5-phosphate. Glutamate 150 serves as a coordination point for Mn(2+). Glycine 206 is an NADPH binding site. Residues serine 213, asparagine 218, lysine 219, and glutamate 222 each contribute to the 1-deoxy-D-xylulose 5-phosphate site. Position 222 (glutamate 222) interacts with Mn(2+).

The protein belongs to the DXR family. The cofactor is Mg(2+). Requires Mn(2+) as cofactor.

It catalyses the reaction 2-C-methyl-D-erythritol 4-phosphate + NADP(+) = 1-deoxy-D-xylulose 5-phosphate + NADPH + H(+). It functions in the pathway isoprenoid biosynthesis; isopentenyl diphosphate biosynthesis via DXP pathway; isopentenyl diphosphate from 1-deoxy-D-xylulose 5-phosphate: step 1/6. In terms of biological role, catalyzes the NADPH-dependent rearrangement and reduction of 1-deoxy-D-xylulose-5-phosphate (DXP) to 2-C-methyl-D-erythritol 4-phosphate (MEP). This Francisella tularensis subsp. tularensis (strain WY96-3418) protein is 1-deoxy-D-xylulose 5-phosphate reductoisomerase.